A 366-amino-acid chain; its full sequence is DNA repair protein RAD51 homolog 3 (366 aa).

A required for Holliday junction resolution activity region spans residues 1–117 (MQRELVSFPL…LMKTTEVCGV (117 aa)). A Phosphoserine modification is found at serine 11. An interaction with RAD51B, RAD51D and XRCC3 region spans residues 70–127 (SVAGKKYTALELLEQEHTQGFIITFCSALDNILGGGIPLMKTTEVCGVPGVGKTQLCM). Residue 116–123 (GVPGVGKT) participates in ATP binding. The disordered stretch occupies residues 338–366 (RDAAVTASSSQTEGSSNLRKRSREPEEGC). Residues 343–354 (TASSSQTEGSSN) are compositionally biased toward polar residues. Residues 356 to 360 (RKRSR) carry the Nuclear localization signal motif.

Belongs to the RecA family. RAD51 subfamily. As to quaternary structure, part of the RAD51 paralog protein complexes BCDX2 and CX3; the complexes have a ring-like structure arranged into a flat disc around a central channel. The BCDX2 complex consits of RAD51B, RAD51C, RAD51D and XRCC2; the CX3 complex consists of RAD51C and XRCC3. The BCDX2 subcomplex RAD51B:RAD51C interacts with RAD51. Interacts with SWSAP1; involved in homologous recombination repair. Interacts directly with PALB2 which may serve as a scaffold for a HR complex containing PALB2, BRCA2, RAD51C, RAD51 and XRCC3. Interacts with HELQ.

It localises to the nucleus. The protein localises to the cytoplasm. It is found in the perinuclear region. Its subcellular location is the mitochondrion. In terms of biological role, essential for the homologous recombination (HR) pathway of DNA repair. Involved in the homologous recombination repair (HRR) pathway of double-stranded DNA breaks arising during DNA replication or induced by DNA-damaging agents. Part of the RAD51 paralog protein complexes BCDX2 and CX3 which act at different stages of the BRCA1-BRCA2-dependent HR pathway. Upon DNA damage, BCDX2 seems to act downstream of BRCA2 recruitment and upstream of RAD51 recruitment; CX3 seems to act downstream of RAD51 recruitment; both complexes bind predominantly to the intersection of the four duplex arms of the Holliday junction (HJ) and to junction of replication forks. The BCDX2 complex was originally reported to bind single-stranded DNA, single-stranded gaps in duplex DNA and specifically to nicks in duplex DNA. The BCDX2 subcomplex RAD51B:RAD51C exhibits single-stranded DNA-dependent ATPase activity suggesting an involvement in early stages of the HR pathway. Involved in RAD51 foci formation in response to DNA damage suggesting an involvement in early stages of HR probably in the invasion step. Has an early function in DNA repair in facilitating phosphorylation of the checkpoint kinase CHEK2 and thereby transduction of the damage signal, leading to cell cycle arrest and HR activation. Participates in branch migration and HJ resolution and thus is important for processing HR intermediates late in the DNA repair process; the function may be linked to the CX3 complex. Part of a PALB2-scaffolded HR complex containing BRCA2 and which is thought to play a role in DNA repair by HR. Protects RAD51 from ubiquitin-mediated degradation that is enhanced following DNA damage. Plays a role in regulating mitochondrial DNA copy number under conditions of oxidative stress in the presence of RAD51 and XRCC3. Contributes to DNA cross-link resistance, sister chromatid cohesion and genomic stability. Involved in maintaining centrosome number in mitosis. The sequence is that of DNA repair protein RAD51 homolog 3 (RAD51C) from Cricetulus griseus (Chinese hamster).